We begin with the raw amino-acid sequence, 712 residues long: Protein phosphatase 1 regulatory subunit 37 (712 aa).

Residues 1-12 (MEIPPQEAPPGP) are compositionally biased toward pro residues. Residues 1-47 (MEIPPQEAPPGPGADADADAEAETEEASAEAESPTGTSPPADGRLKA) form a disordered region. The span at 16-29 (ADADAEAETEEASA) shows a compositional bias: acidic residues. S56 and S62 each carry phosphoserine. 5 LRR repeats span residues 226-246 (SLAV…MLLA), 254-275 (NLRE…AQLG), 283-303 (SLQI…AYIC), 312-332 (GLVT…AFLG), and 340-360 (SLET…RNLK). The segment at 492–680 (ESGELPAVGS…PPGLEAKGGS (189 aa)) is disordered. Acidic residues predominate over residues 514–531 (SDSDSDSDREEQEEEEED). S583 bears the Phosphoserine mark. Residues 605-626 (PPVPPTFVSSPPPSPPSPPASP) are compositionally biased toward pro residues. Over residues 639 to 651 (SEAQPQLEPSQAG) the composition is skewed to polar residues.

The protein belongs to the PPP1R37 family. In terms of assembly, interacts with PPP1CA.

Functionally, inhibits phosphatase activity of protein phosphatase 1 (PP1) complexes. The protein is Protein phosphatase 1 regulatory subunit 37 (Ppp1r37) of Mus musculus (Mouse).